We begin with the raw amino-acid sequence, 683 residues long: 1,4-alpha-glucan-branching enzyme (683 aa).

Residues W92 and K127 each coordinate (1,4-alpha-D-glucosyl)n. Catalysis depends on D342, which acts as the Nucleophile. Catalysis depends on E397, which acts as the Proton donor.

Belongs to the glycosyl hydrolase 13 family. GlgB subfamily.

It localises to the cytoplasm. It catalyses the reaction Transfers a segment of a (1-&gt;4)-alpha-D-glucan chain to a primary hydroxy group in a similar glucan chain.. It participates in glycan biosynthesis; glycogen biosynthesis. Functionally, glycogen-branching enzyme participates in the glycogen biosynthetic process along with glycogenin and glycogen synthase. Generates alpha-1,6-glucosidic branches from alpha-1,4-linked glucose chains, to increase solubility of the glycogen polymer. The sequence is that of 1,4-alpha-glucan-branching enzyme (GLC3) from Rhizophagus irregularis (strain DAOM 181602 / DAOM 197198 / MUCL 43194) (Arbuscular mycorrhizal fungus).